Consider the following 390-residue polypeptide: GTPase Obg (390 aa).

An Obg domain is found at 1 to 159 (MKFVDEASIL…RDLMLELMLL (159 aa)). The interval 127-147 (NTRFKSSVNRTPRQKTMGTPG) is disordered. Positions 129–143 (RFKSSVNRTPRQKTM) are enriched in polar residues. Positions 160 to 333 (ADVGMLGMPN…LCWDVMTFII (174 aa)) constitute an OBG-type G domain. GTP is bound by residues 166-173 (GMPNAGKS), 191-195 (FTTLV), 213-216 (DIPG), 283-286 (NKID), and 314-316 (SAA). Mg(2+) contacts are provided by serine 173 and threonine 193.

It belongs to the TRAFAC class OBG-HflX-like GTPase superfamily. OBG GTPase family. As to quaternary structure, monomer. Mg(2+) is required as a cofactor.

The protein resides in the cytoplasm. An essential GTPase which binds GTP, GDP and possibly (p)ppGpp with moderate affinity, with high nucleotide exchange rates and a fairly low GTP hydrolysis rate. Plays a role in control of the cell cycle, stress response, ribosome biogenesis and in those bacteria that undergo differentiation, in morphogenesis control. In Citrobacter koseri (strain ATCC BAA-895 / CDC 4225-83 / SGSC4696), this protein is GTPase Obg.